A 119-amino-acid chain; its full sequence is UPF0231 protein ECA3777 (119 aa).

It belongs to the UPF0231 family.

The sequence is that of UPF0231 protein ECA3777 from Pectobacterium atrosepticum (strain SCRI 1043 / ATCC BAA-672) (Erwinia carotovora subsp. atroseptica).